The chain runs to 34 residues: Photosystem I reaction center subunit XII (34 aa).

Residues 5 to 25 (ISSPEIFIALVVAAHAAILAL) traverse the membrane as a helical segment.

This sequence belongs to the PsaM family.

The protein resides in the cellular thylakoid membrane. This Synechococcus sp. (strain CC9902) protein is Photosystem I reaction center subunit XII.